Reading from the N-terminus, the 302-residue chain is MNILLLAGGWSSEREVSLQSAELITSAMIEYGHTVTCLDPLYDFDKIVEVAEKQDVAFILLHGSPGEDGILQALLERVGCPYQGASPAGSLLALHKAAAKALFRREGLLTPKSVFLPLKPEVTWEPGLNYPIFVKSNIGGSSVNVHLVTNYEELFIAMEALFNAGEEVLLEEAIIGQEVTCGVIDDQALPPILIRSQGKFFDYYNKYAKNGAEEICPAPLEPHVLKHIQEYALRAHNTLNLQGCSRADFILRDDELLFLLEVNTIPGMSATSLVPREAAAMGLTFPELVEKLIQLAIRDHRK.

An ATP-grasp domain is found at 100-294 (KALFRREGLL…FPELVEKLIQ (195 aa)). 127–180 (GLNYPIFVKSNIGGSSVNVHLVTNYEELFIAMEALFNAGEEVLLEEAIIGQEVT) contributes to the ATP binding site. Mg(2+)-binding residues include Asp-248, Glu-261, and Asn-263.

It belongs to the D-alanine--D-alanine ligase family. Mg(2+) serves as cofactor. Mn(2+) is required as a cofactor.

It is found in the cytoplasm. It catalyses the reaction 2 D-alanine + ATP = D-alanyl-D-alanine + ADP + phosphate + H(+). It functions in the pathway cell wall biogenesis; peptidoglycan biosynthesis. Its function is as follows. Cell wall formation. The polypeptide is D-alanine--D-alanine ligase (Lawsonia intracellularis (strain PHE/MN1-00)).